Consider the following 1684-residue polypeptide: MASNNYIQIMEKAPKYQTAYACEGKKLTIECEQGELINLIRANYGRFSITICNDHGNVEWSVNCMFPKSLTVLNSRCAHKNSCSVLAATSMFGDPCPGTHKYLEAHYQCVSAAQTSTTTNRPSPPPWVLNNGPPIFGNGSGLIHPTNIGGGSGGASAPPRLPTLPGVVGINGNGGMFNIPPPATHATPPGSTATLPGGRLKGVATSTTTTKHPAGRRDGLPPPPQLHHHHNHHTDETTPTKPSGKVPAASNATAPSNTRILTGVGGGGTDDGTLLTTKSSPNRTPGTAASGPSVSSNGSAVRTINNINLNAAGMAGADDETKLFCGPTHARNLFWNMTRVGDVNVQPCPGGAAGIAKWRCVLMKRMPDSSFDEDDEEMAGTSTTTPMSTSSDCLYNSSSCEPPVTMAHKVNQRLRNFEPTWHPLTPDLTQCRSLWLNNLEMRVNQRDSSLISIANDMSEVTSSKTLYGGDMLVTTKIIQTVSEKMLHDKETFPDQRQREAMIMELLHCVVKTGSNLLDESQLSSWLDLNPEDQMRVATSLLTGLEYNAFLLADTIIRERSVVQKVKNILLSVRVLETKTIQSSVVFPDSDQWPISSDRIELPRAALIENSEGGLVRIVFAAFDRLESILKPSYDHFDLKSSRSYVRNTAILTNDSDASAGDLQQRLRILNSKVISASLGKGRHIQLSQPITLTLKHLKTENVTNPTCVFWNYIDHAWSANGCSLESTNRTHSVCSCNHLTNFAILMDVVDEHQHSLFTMFDGNMRIFIYISIAICVVFIVIALLTLKLFNGVFVKSARTSIYINIYICLLAIELLFLLGIEQTETSIFCGFITVFLHCAILSGTSWFCYEAFHSYSTLTSDELLLEVDQTPKVNCYYLLSYGLSLSVVAISLVINPSTYTQNDYCVLMEANAVFYATFVAPVLIFFMAAIGYTFLSWIIMCRKSRTGLKTKEHTRLATVRFDIRCSFVFFLLLSAVWCSAYFYLRGAKMDEDVTGIYGYNFICFNTLLGLYIFVFHCIQNEKIRREYRKYVRQHAWLPKCLRCSKTSISSGIVAGGGTGLGGTNAGTLCSVSTAKKSKLPLGTNDDAHDEQQQQQHMSATEDAIMGASSDCELNEAQQRRTLKSGLITGTLQPSQSLGGHVVLERGNTLRSTGHASPTSSAGSTHLIFAHKPQQQQPPLGEAYYHQPDYYSWKQTAGGMKAQREYYNNAGAATSSPQQAHEVFYWTQKPNSQHGKKKRGGVGAIPASPSGSLHSRATAASQVLFYPSYKKTKPGQQAHPHYAEALDPPQPPNTAAYYQQQQQLRQQRQQQQQQLSSDEEQAEQHAHLLHLQHQQQQQQQRRAGGQQQLPAPPPHMAQYQQEFMQRQYRNKHSNCDLGDAYYNQGSVGGADGGPVYEEILSNRNSDAQHYEVGDFDVDEVYNNSVGTGVFNNMRAAVAAGGSRYGGSLSGGSVSSRNQQQQQHSLAQPISARRCTADEDDDEDEDDEETTAAEQLHDGVCDEEEEDEESDMEDDSHGLPPQSAERMRRLMALQDEDFKRRFQRQQRKHGAPVDYGTLPPGSAQAVIGGAHPEHNGAVFGVSGGVGEGSMRGALRQQHAKSPSARLAVNELFGHGNTGPPLPPANQTPAQKRQQLQKLSPQSTTSSSSHTSHSNPHSHPPHHQQRHLSAMLDENNTVRCYLEPLAK.

Over 1–765 the chain is Extracellular; it reads MASNNYIQIM…LFTMFDGNMR (765 aa). The region spanning 21–110 is the SUEL-type lectin domain; that stretch reads ACEGKKLTIE…KYLEAHYQCV (90 aa). Asparagine 138, asparagine 251, asparagine 297, and asparagine 336 each carry an N-linked (GlcNAc...) asparagine glycan. Positions 181-300 are disordered; it reads PPATHATPPG…GPSVSSNGSA (120 aa). 2 stretches are compositionally biased toward polar residues: residues 250-260 and 278-300; these read SNATAPSNTRI and KSSP…NGSA. Residues 370-391 are disordered; that stretch reads SFDEDDEEMAGTSTTTPMSTSS. A compositionally biased stretch (low complexity) spans 381 to 391; that stretch reads TSTTTPMSTSS. Asparagine 396, asparagine 653, asparagine 701, and asparagine 728 each carry an N-linked (GlcNAc...) asparagine glycan. One can recognise a GAIN-B domain in the interval 559–752; sequence RSVVQKVKNI…AILMDVVDEH (194 aa). Cystine bridges form between cysteine 707–cysteine 734 and cysteine 722–cysteine 736. The interval 707–752 is GPS; it reads CVFWNYIDHAWSANGCSLESTNRTHSVCSCNHLTNFAILMDVVDEH. A helical transmembrane segment spans residues 766–786; it reads IFIYISIAICVVFIVIALLTL. Residues 787-799 lie on the Cytoplasmic side of the membrane; it reads KLFNGVFVKSART. The helical transmembrane segment at 800-820 threads the bilayer; sequence SIYINIYICLLAIELLFLLGI. The Extracellular portion of the chain corresponds to 821-826; that stretch reads EQTETS. A helical membrane pass occupies residues 827–847; it reads IFCGFITVFLHCAILSGTSWF. Residues 848 to 873 are Cytoplasmic-facing; sequence CYEAFHSYSTLTSDELLLEVDQTPKV. Residues 874–894 traverse the membrane as a helical segment; the sequence is NCYYLLSYGLSLSVVAISLVI. The Extracellular portion of the chain corresponds to 895–918; it reads NPSTYTQNDYCVLMEANAVFYATF. Residues 919–939 traverse the membrane as a helical segment; sequence VAPVLIFFMAAIGYTFLSWII. Residues 940-966 are Cytoplasmic-facing; the sequence is MCRKSRTGLKTKEHTRLATVRFDIRCS. The chain crosses the membrane as a helical span at residues 967–987; that stretch reads FVFFLLLSAVWCSAYFYLRGA. The Extracellular portion of the chain corresponds to 988–994; sequence KMDEDVT. A helical membrane pass occupies residues 995–1015; sequence GIYGYNFICFNTLLGLYIFVF. The Cytoplasmic portion of the chain corresponds to 1016–1684; it reads HCIQNEKIRR…VRCYLEPLAK (669 aa). The segment at 1080–1100 is disordered; it reads PLGTNDDAHDEQQQQQHMSAT. Serine 1156, serine 1247, and serine 1254 each carry phosphoserine. Disordered regions lie at residues 1228 to 1255, 1270 to 1353, 1441 to 1520, and 1587 to 1669; these read KPNS…LHSR, KTKP…APPP, SRYG…LPPQ, and SMRG…SAML. Residues 1298–1314 show a composition bias toward low complexity; that stretch reads QQQQQLRQQRQQQQQQL. Serine 1315 and serine 1316 each carry phosphoserine. The span at 1328 to 1348 shows a compositional bias: low complexity; that stretch reads LHLQHQQQQQQQRRAGGQQQL. Residues 1455–1466 show a composition bias toward polar residues; that stretch reads RNQQQQQHSLAQ. Acidic residues-rich tracts occupy residues 1476 to 1489 and 1499 to 1512; these read DEDD…EETT and CDEE…DMED. Positions 1631 to 1654 are enriched in low complexity; sequence QQLQKLSPQSTTSSSSHTSHSNPH.

It belongs to the G-protein coupled receptor 2 family. LN-TM7 subfamily. In terms of assembly, forms a heterodimer, consisting of a large extracellular region non-covalently linked to a seven-transmembrane moiety. In terms of processing, proteolytically cleaved into 2 subunits, an extracellular subunit and a seven-transmembrane subunit.

It localises to the cell membrane. The polypeptide is Latrophilin Cirl (Drosophila persimilis (Fruit fly)).